A 570-amino-acid polypeptide reads, in one-letter code: High-affinity hexose transporter HXT6 (570 aa).

Over 1–60 (MSQDAAIAEQTPVEHLSAVDSASHSVLSTPSNKAERDEIKAYGEGEEHEPVVEIPKRPAS) the chain is Cytoplasmic. A helical membrane pass occupies residues 61 to 81 (AYVTVSIMCIMIAFGGFVFGW). Topologically, residues 82 to 116 (DTGTISGFINQTDFIRRFGMKHKDGTNYLSKVRTG) are extracellular. A glycan (N-linked (GlcNAc...) asparagine) is linked at Asn91. A helical transmembrane segment spans residues 117-137 (LIVSIFNIGCAIGGIILSKLG). Residues 138–143 (DMYGRK) lie on the Cytoplasmic side of the membrane. A helical transmembrane segment spans residues 144–164 (VGLIVVVVIYIIGIIIQIASI). Residues 165-174 (NKWYQYFIGR) lie on the Extracellular side of the membrane. A helical membrane pass occupies residues 175–195 (IISGLGVGGIAVLSPMLISEV). Topologically, residues 196-201 (SPKHLR) are cytoplasmic. A helical membrane pass occupies residues 202–222 (GTLVSCYQLMITAGIFLGYCT). The Extracellular segment spans residues 223–236 (NFGTKNYSNSVQWR). Asn228 is a glycosylation site (N-linked (GlcNAc...) asparagine). Residues 237-257 (VPLGLCFAWALFMIGGMTFVP) form a helical membrane-spanning segment. The Cytoplasmic portion of the chain corresponds to 258 to 340 (ESPRYLAEVG…IQSLQQLTGD (83 aa)). Residues 341–357 (NYFFYYGTTIFKAVGLS) form a helical membrane-spanning segment. Residues 358 to 363 (DSFETS) are Extracellular-facing. A helical transmembrane segment spans residues 364-381 (IVLGIVNFASTFVGIYVV). The Cytoplasmic segment spans residues 382-388 (ERYGRRT). Residues 389–409 (CLLWGAASMTACMVVYASVGV) form a helical membrane-spanning segment. Over 410 to 431 (TRLWPNGQDQPSSKGAGNCMIV) the chain is Extracellular. A helical membrane pass occupies residues 432-452 (FACFYIFCFATTWAPIPYVVV). Topologically, residues 453–469 (SETFPLRVKSKAMSIAT) are cytoplasmic. Residues 470–490 (AANWLWGFLIGFFTPFITGAI) traverse the membrane as a helical segment. Residue Asn491 is a topological domain, extracellular. A helical transmembrane segment spans residues 492-512 (FYYGYVFMGCLVFMFFYVLLV). The Cytoplasmic segment spans residues 513 to 570 (VPETKGLTLEEVNTMWEEGVLPWKSASWVPPSRRGANYDAEEMAHDDKPLYKRMFSTK). Residue Lys560 forms a Glycyl lysine isopeptide (Lys-Gly) (interchain with G-Cter in ubiquitin) linkage.

It belongs to the major facilitator superfamily. Sugar transporter (TC 2.A.1.1) family.

Its subcellular location is the membrane. Functionally, high-affinity glucose transporter. The polypeptide is High-affinity hexose transporter HXT6 (HXT6) (Saccharomyces cerevisiae (strain ATCC 204508 / S288c) (Baker's yeast)).